The sequence spans 655 residues: Probable glucan endo-1,3-beta-glucosidase btgC (655 aa).

Disordered regions lie at residues 1-61 and 89-114; these read MSGD…ATPG and SGVDAFRDTDGGNFPAERGYNAPGSD. At 1–282 the chain is on the cytoplasmic side; that stretch reads MSGDPRSFSF…PKPGTGSRKR (282 aa). Over residues 19 to 33 the composition is skewed to polar residues; it reads DSSQQPLHPTNTMAD. Positions 89–98 are enriched in basic and acidic residues; it reads SGVDAFRDTD. The helical; Signal-anchor for type II membrane protein transmembrane segment at 283–303 threads the bilayer; sequence GWIVGIILAVVIVGAIVGGAV. Topologically, residues 304 to 655 are extracellular; that stretch reads GGTLGNREKE…IPDCGGKTAT (352 aa). The tract at residues 305–338 is disordered; the sequence is GTLGNREKESPSSSETASGDEKVNGDLGKDSDEI. Residues 323-338 show a composition bias toward basic and acidic residues; sequence GDEKVNGDLGKDSDEI. Residue Asn-426 is glycosylated (N-linked (GlcNAc...) asparagine). Glu-458 (proton donor) is an active-site residue. Residue Glu-557 is the Nucleophile of the active site. Asn-576 and Asn-602 each carry an N-linked (GlcNAc...) asparagine glycan.

The protein belongs to the glycosyl hydrolase 17 family.

The protein localises to the cell membrane. The catalysed reaction is Hydrolysis of (1-&gt;3)-beta-D-glucosidic linkages in (1-&gt;3)-beta-D-glucans.. Functionally, glucanases play a role in cell expansion during growth, in cell-cell fusion during mating, and in spore release during sporulation. This enzyme may be involved in beta-glucan degradation. Active on laminarin and lichenan. The polypeptide is Probable glucan endo-1,3-beta-glucosidase btgC (btgC) (Aspergillus terreus (strain NIH 2624 / FGSC A1156)).